The sequence spans 86 residues: Small ribosomal subunit protein bS20 (86 aa).

The protein belongs to the bacterial ribosomal protein bS20 family.

Functionally, binds directly to 16S ribosomal RNA. This chain is Small ribosomal subunit protein bS20, found in Arthrobacter sp. (strain FB24).